The sequence spans 503 residues: Sugar phosphate exchanger 3 (503 aa).

A helical membrane pass occupies residues 20 to 40; that stretch reads YTHHHLAAFLLTFFSYSLLHA. N62 and N71 each carry an N-linked (GlcNAc...) asparagine glycan. 5 helical membrane-spanning segments follow: residues 87 to 107, 119 to 139, 152 to 172, 183 to 203, and 214 to 234; these read TLFLGLLDTIFLFAYAVGLFI, LVLTFGMCSSAITMFVFGTLT, LVWIVNGLLQSTGWPCVVAIM, FVFGLWSACASVGNILGAFLA, and AFLVTASVQFAGGIIIFFGLV. N275 carries N-linked (GlcNAc...) asparagine glycosylation. 6 consecutive transmembrane segments (helical) span residues 300 to 322, 342 to 362, 367 to 387, 395 to 415, 437 to 457, and 466 to 486; these read GVLLYSLAYACLKLVNYSFFFWL, IWYDIGGIVGGTVQGLISDLM, PVLTVSLLLAVGALFGYSHSP, FIMSITGFFIGGPSNMISSAI, GIVDGTGSIGAAMGQFLVPLI, and VFYFFIFMICMTTVFMVPLIV.

The protein belongs to the major facilitator superfamily. Organophosphate:Pi antiporter (OPA) (TC 2.A.1.4) family.

The protein resides in the endoplasmic reticulum membrane. The protein localises to the lysosome membrane. In terms of biological role, unlike the other SLC37 members, seems to lack glucose-6-phosphate antiporter activity. The polypeptide is Sugar phosphate exchanger 3 (slc37a3) (Xenopus laevis (African clawed frog)).